The sequence spans 423 residues: Transmembrane protein 130 (423 aa).

The N-terminal stretch at 1-24 (MAQAVWSRLGRILWLSCLLPWAPA) is a signal peptide. The Extracellular segment spans residues 25–339 (GVAAGLYELN…IQVWPSRIQP (315 aa)). N-linked (GlcNAc...) asparagine glycans are attached at residues asparagine 34, asparagine 197, and asparagine 300. In terms of domain architecture, PKD spans 147–233 (WPSSYLTKTI…AVMQKTGDFS (87 aa)). A helical membrane pass occupies residues 340-360 (AVFAFPCATLITVMLAFIMYM). At 361-423 (TLRNATQQKD…LYKSVKTYTV (63 aa)) the chain is on the cytoplasmic side.

It is found in the golgi apparatus membrane. In Pongo abelii (Sumatran orangutan), this protein is Transmembrane protein 130 (TMEM130).